The primary structure comprises 350 residues: Protein pelota homolog (350 aa).

It belongs to the eukaryotic release factor 1 family. Pelota subfamily. In terms of assembly, monomer. The cofactor is a divalent metal cation.

The protein resides in the cytoplasm. Functionally, may function in recognizing stalled ribosomes, interact with stem-loop structures in stalled mRNA molecules, and effect endonucleolytic cleavage of the mRNA. May play a role in the release non-functional ribosomes and degradation of damaged mRNAs. Has endoribonuclease activity. The protein is Protein pelota homolog of Methanosarcina barkeri (strain Fusaro / DSM 804).